We begin with the raw amino-acid sequence, 263 residues long: 7beta-hydroxysteroid dehydrogenase (263 aa).

Residues 17-21 (TEGVG), 40-41 (RR), and 66-67 (DF) each bind NADP(+). Tyr156 functions as the Proton acceptor in the catalytic mechanism. Ser240 lines the NADP(+) pocket.

Belongs to the short-chain dehydrogenases/reductases (SDR) family.

It carries out the reaction a 7beta-hydroxysteroid + NADP(+) = a 7-oxosteroid + NADPH + H(+). The catalysed reaction is 7-oxolithocholate + NADPH + H(+) = ursodeoxycholate + NADP(+). In terms of biological role, 7beta-hydroxysteroid dehydrogenase that catalyzes the reduction of the 7-oxo group of 7-oxo-lithocholate (7-oxo-LCA), to yield ursodeoxycholate (UDCA). As R.gnavus is a common core bacterium of the human gut microbiota, this enzyme contributes to the formation of UDCA in the human colon. UDCA is regarded as a chemopreventive beneficial secondary bile acid due to its low hydrophobicity; it protects hepatocytes and bile duct epithelial cells against necrosis and apoptosis induced by more hydrophobic secondary bile acids like deoxycholate (DCA). This enzyme is also able to catalyze the reverse reaction in vitro, i.e. the oxidation of the 7beta-hydroxy group of UDCA to 7-oxo-LCA, but much less efficiently than the reduction reaction. This is 7beta-hydroxysteroid dehydrogenase from Mediterraneibacter gnavus (strain ATCC 29149 / DSM 114966 / JCM 6515 / VPI C7-9) (Ruminococcus gnavus).